The chain runs to 259 residues: L-cystine import ATP-binding protein TcyN (259 aa).

Residues 2–239 form the ABC transporter domain; the sequence is IEIKNIHKQF…TKKDRTRQFL (238 aa). 34–41 lines the ATP pocket; it reads GPSGSGKT.

Belongs to the ABC transporter superfamily. L-cystine importer (TC 3.A.1.3.13) family. As to quaternary structure, the complex is composed of two ATP-binding proteins (TcyN), two transmembrane proteins (TcyL and TcyM) and two solute-binding proteins (TcyJ and TcyK).

Its subcellular location is the cell membrane. Its function is as follows. Part of the ABC transporter complex TcyJKLMN involved in L-cystine import. Responsible for energy coupling to the transport system. Is also involved in cystathionine, djenkolate, and S-methylcysteine transport. The protein is L-cystine import ATP-binding protein TcyN (tcyN) of Bacillus subtilis (strain 168).